A 284-amino-acid polypeptide reads, in one-letter code: 4-diphosphocytidyl-2-C-methyl-D-erythritol kinase (284 aa).

Residue lysine 14 is part of the active site. An ATP-binding site is contributed by 98–108; it reads PMGGGLGGGSS. The active site involves aspartate 140.

This sequence belongs to the GHMP kinase family. IspE subfamily.

The enzyme catalyses 4-CDP-2-C-methyl-D-erythritol + ATP = 4-CDP-2-C-methyl-D-erythritol 2-phosphate + ADP + H(+). It participates in isoprenoid biosynthesis; isopentenyl diphosphate biosynthesis via DXP pathway; isopentenyl diphosphate from 1-deoxy-D-xylulose 5-phosphate: step 3/6. Functionally, catalyzes the phosphorylation of the position 2 hydroxy group of 4-diphosphocytidyl-2C-methyl-D-erythritol. This is 4-diphosphocytidyl-2-C-methyl-D-erythritol kinase from Shewanella baltica (strain OS155 / ATCC BAA-1091).